A 263-amino-acid polypeptide reads, in one-letter code: HTH-type transcriptional repressor NanR (263 aa).

The disordered stretch occupies residues 1–21; sequence MGLMNAFDSQTEDSSPVIGRN. The HTH gntR-type domain maps to 30–98; sequence KKLSEMVEEE…NGERARVSRP (69 aa). The H-T-H motif DNA-binding region spans 58-77; sequence ERELMAFFNVGRPSVREALA.

This sequence belongs to the NanR family.

Its function is as follows. Transcriptional repressor that controls expression of the genes required for the catabolism of sialic acids. This is HTH-type transcriptional repressor NanR from Escherichia coli O7:K1 (strain IAI39 / ExPEC).